The chain runs to 435 residues: NADH-quinone oxidoreductase subunit D (435 aa).

Belongs to the complex I 49 kDa subunit family. In terms of assembly, NDH-1 is composed of 14 different subunits. Subunits NuoB, C, D, E, F, and G constitute the peripheral sector of the complex.

The protein localises to the cell inner membrane. The catalysed reaction is a quinone + NADH + 5 H(+)(in) = a quinol + NAD(+) + 4 H(+)(out). In terms of biological role, NDH-1 shuttles electrons from NADH, via FMN and iron-sulfur (Fe-S) centers, to quinones in the respiratory chain. The immediate electron acceptor for the enzyme in this species is believed to be ubiquinone. Couples the redox reaction to proton translocation (for every two electrons transferred, four hydrogen ions are translocated across the cytoplasmic membrane), and thus conserves the redox energy in a proton gradient. In Xylella fastidiosa (strain 9a5c), this protein is NADH-quinone oxidoreductase subunit D.